We begin with the raw amino-acid sequence, 115 residues long: uncharacterized protein (115 aa).

3 consecutive transmembrane segments (helical) span residues 1-21, 33-53, and 54-74; these read MFLA…FGSW, ALAL…LAAG, and GVVA…VCIA.

This sequence to M.leprae ML0030.

It localises to the cell membrane. This is an uncharacterized protein from Mycobacterium tuberculosis (strain CDC 1551 / Oshkosh).